The primary structure comprises 192 residues: Large ribosomal subunit protein uL3 (192 aa).

The protein belongs to the universal ribosomal protein uL3 family. In terms of assembly, part of the 50S ribosomal subunit. Forms a cluster with proteins L14 and L19.

In terms of biological role, one of the primary rRNA binding proteins, it binds directly near the 3'-end of the 23S rRNA, where it nucleates assembly of the 50S subunit. The chain is Large ribosomal subunit protein uL3 (rplC) from Wolinella succinogenes (strain ATCC 29543 / DSM 1740 / CCUG 13145 / JCM 31913 / LMG 7466 / NCTC 11488 / FDC 602W) (Vibrio succinogenes).